The following is a 161-amino-acid chain: MRVGSRLAVDVGKARIGLARSDPHGLIATPVETVPRDAAGSADVRRILEVAAEIDCTELVVGLPLALSGRATASTDDAEGFARRLADATEIRVRLVDERLSTVSAQGALRASGRGSRKQKPVIDQVAAVIILQHALETERAAGSPPGALVPRNRVDPDRHA.

Residues 142–161 (AGSPPGALVPRNRVDPDRHA) are disordered.

The protein belongs to the YqgF nuclease family.

The protein localises to the cytoplasm. Could be a nuclease involved in processing of the 5'-end of pre-16S rRNA. The polypeptide is Putative pre-16S rRNA nuclease (Clavibacter sepedonicus (Clavibacter michiganensis subsp. sepedonicus)).